The sequence spans 275 residues: Putative carbamate hydrolase RutD (275 aa).

This sequence belongs to the AB hydrolase superfamily. Hydrolase RutD family.

The catalysed reaction is carbamate + 2 H(+) = NH4(+) + CO2. In terms of biological role, involved in pyrimidine catabolism. May facilitate the hydrolysis of carbamate, a reaction that can also occur spontaneously. In Escherichia coli O6:H1 (strain CFT073 / ATCC 700928 / UPEC), this protein is Putative carbamate hydrolase RutD.